The primary structure comprises 238 residues: Pyridoxine 5'-phosphate synthase (238 aa).

Asn-7 contributes to the 3-amino-2-oxopropyl phosphate binding site. 1-deoxy-D-xylulose 5-phosphate is bound at residue 9 to 10 (DH). Arg-18 serves as a coordination point for 3-amino-2-oxopropyl phosphate. His-43 (proton acceptor) is an active-site residue. Positions 45 and 50 each coordinate 1-deoxy-D-xylulose 5-phosphate. The active-site Proton acceptor is Glu-70. Thr-100 lines the 1-deoxy-D-xylulose 5-phosphate pocket. His-190 acts as the Proton donor in catalysis. Residues Gly-191 and 212–213 (GH) contribute to the 3-amino-2-oxopropyl phosphate site.

It belongs to the PNP synthase family. Homooctamer; tetramer of dimers.

It is found in the cytoplasm. The enzyme catalyses 3-amino-2-oxopropyl phosphate + 1-deoxy-D-xylulose 5-phosphate = pyridoxine 5'-phosphate + phosphate + 2 H2O + H(+). Its pathway is cofactor biosynthesis; pyridoxine 5'-phosphate biosynthesis; pyridoxine 5'-phosphate from D-erythrose 4-phosphate: step 5/5. Its function is as follows. Catalyzes the complicated ring closure reaction between the two acyclic compounds 1-deoxy-D-xylulose-5-phosphate (DXP) and 3-amino-2-oxopropyl phosphate (1-amino-acetone-3-phosphate or AAP) to form pyridoxine 5'-phosphate (PNP) and inorganic phosphate. This Prochlorococcus marinus (strain MIT 9515) protein is Pyridoxine 5'-phosphate synthase.